The sequence spans 361 residues: POU domain, class 3, transcription factor 4 (361 aa).

2 disordered regions span residues 99-131 and 144-192; these read PHVAHHSPHTNHPNAWGASPAPNSSITNSGQPL and MLEH…PTSD. Over residues 119–131 the composition is skewed to polar residues; sequence APNSSITNSGQPL. Residues 165-183 show a composition bias toward basic and acidic residues; sequence VLREPPDHGELGSHHCQDH. One can recognise a POU-specific domain in the interval 186–260; that stretch reads EETPTSDELE…LLNKWLEEAD (75 aa). Position 265 is a phosphoserine (S265). Residues 278 to 337 constitute a DNA-binding region (homeobox); the sequence is KRKKRTSIEVSVKGVLETHFLKCPKPAAQEISSLADSLQLEKEVVRVWFCNRRQKEKRMT. A disordered region spans residues 334–361; that stretch reads KRMTPPGDQQPHEVYSHTVKTDASCHDL. The span at 343–361 shows a compositional bias: basic and acidic residues; sequence QPHEVYSHTVKTDASCHDL.

Belongs to the POU transcription factor family. Class-3 subfamily.

The protein localises to the nucleus. Its function is as follows. Probable transcription factor which exert its primary action widely during early neural development and in a very limited set of neurons in the mature brain. In Mesocricetus auratus (Golden hamster), this protein is POU domain, class 3, transcription factor 4 (Pou3f4).